The chain runs to 1372 residues: Cell fusion protein fus1 (1372 aa).

Positions 104 to 522 (LCPDDPNLVN…EQGNNAPGYS (419 aa)) constitute a GBD/FH3 domain. An SH3-binding motif is present at residues 802 to 817 (PFKAPPPAPLPPPAPP). The FH2 domain occupies 868 to 1278 (PGELCNPSKR…AFLRLQALKA (411 aa)).

The protein belongs to the formin homology family. BNI1 subfamily. As to quaternary structure, interacts with actin at the FH2 domain.

It localises to the cytoplasm. Required for cell fusion. It associates with the pre-zygotic projection tips in conjugating cells. The chain is Cell fusion protein fus1 (fus1) from Schizosaccharomyces pombe (strain 972 / ATCC 24843) (Fission yeast).